The chain runs to 422 residues: uncharacterized protein (422 aa).

Residues 5–83 (CVVYVGNIPY…RRLRVDFPTA (79 aa)) enclose the RRM domain. Positions 337 to 358 (RSSSIPSSGSIRSPSLTTTSAQ) are disordered.

It localises to the nucleus. This is an uncharacterized protein from Schizosaccharomyces pombe (strain 972 / ATCC 24843) (Fission yeast).